A 213-amino-acid chain; its full sequence is Thymidylate kinase (213 aa).

ATP is bound at residue 9–16; the sequence is GVEGCGKT.

The protein belongs to the thymidylate kinase family.

It carries out the reaction dTMP + ATP = dTDP + ADP. Its function is as follows. Phosphorylation of dTMP to form dTDP in both de novo and salvage pathways of dTTP synthesis. The protein is Thymidylate kinase of Geotalea uraniireducens (strain Rf4) (Geobacter uraniireducens).